The chain runs to 407 residues: S-adenosylmethionine synthase (407 aa).

Histidine 19 is an ATP binding site. Residue aspartate 21 participates in Mg(2+) binding. Glutamate 47 contributes to the K(+) binding site. Residues glutamate 60 and glutamine 103 each coordinate L-methionine. The flexible loop stretch occupies residues 103-113 (QSQEIADGVDT). The segment at 108–131 (ADGVDTSQEARGDGHFEEDDRAGA) is disordered. ATP is bound by residues 178 to 180 (DGK), aspartate 258, 264 to 265 (RK), alanine 281, and lysine 285. L-methionine is bound at residue aspartate 258. L-methionine is bound at residue lysine 289.

This sequence belongs to the AdoMet synthase family. As to quaternary structure, homotetramer; dimer of dimers. Mg(2+) serves as cofactor. It depends on K(+) as a cofactor.

The protein resides in the cytoplasm. The catalysed reaction is L-methionine + ATP + H2O = S-adenosyl-L-methionine + phosphate + diphosphate. It participates in amino-acid biosynthesis; S-adenosyl-L-methionine biosynthesis; S-adenosyl-L-methionine from L-methionine: step 1/1. Its function is as follows. Catalyzes the formation of S-adenosylmethionine (AdoMet) from methionine and ATP. The overall synthetic reaction is composed of two sequential steps, AdoMet formation and the subsequent tripolyphosphate hydrolysis which occurs prior to release of AdoMet from the enzyme. The sequence is that of S-adenosylmethionine synthase from Corynebacterium efficiens (strain DSM 44549 / YS-314 / AJ 12310 / JCM 11189 / NBRC 100395).